The chain runs to 153 residues: uncharacterized protein (153 aa).

It to M.jannaschii MJ1183.

This is an uncharacterized protein from Methanothermobacter thermautotrophicus (strain ATCC 29096 / DSM 1053 / JCM 10044 / NBRC 100330 / Delta H) (Methanobacterium thermoautotrophicum).